A 272-amino-acid chain; its full sequence is Putative protein-disulfide oxidoreductase RP025 (272 aa).

An N-terminal signal peptide occupies residues 1–21; it reads MRNIFIVLIFLFLSNCSEVKA. In terms of domain architecture, Thioredoxin spans 74 to 263; it reads DSREQKKPEI…ISKAVDKALD (190 aa). Cysteine 116 and cysteine 119 are oxidised to a cystine.

Belongs to the thioredoxin family. DsbA subfamily.

It is found in the periplasm. Functionally, may be required for disulfide bond formation in some proteins. This chain is Putative protein-disulfide oxidoreductase RP025, found in Rickettsia prowazekii (strain Madrid E).